Reading from the N-terminus, the 487-residue chain is UDP-N-acetylmuramate--L-alanine ligase (487 aa).

Position 129–135 (129–135 (GTHGKTT)) interacts with ATP.

This sequence belongs to the MurCDEF family.

It localises to the cytoplasm. The catalysed reaction is UDP-N-acetyl-alpha-D-muramate + L-alanine + ATP = UDP-N-acetyl-alpha-D-muramoyl-L-alanine + ADP + phosphate + H(+). The protein operates within cell wall biogenesis; peptidoglycan biosynthesis. Its function is as follows. Cell wall formation. This Aliivibrio salmonicida (strain LFI1238) (Vibrio salmonicida (strain LFI1238)) protein is UDP-N-acetylmuramate--L-alanine ligase.